Consider the following 270-residue polypeptide: Monofunctional glycosyltransferase (270 aa).

Positions 1–10 are enriched in polar residues; that stretch reads MKRSQRMNNS. The disordered stretch occupies residues 1 to 36; the sequence is MKRSQRMNNSPERHSQYRNEPHYNTYYQPVGKPPKK. The segment covering 11 to 21 has biased composition (basic and acidic residues); sequence PERHSQYRNEP. Residues 42–62 traverse the membrane as a helical segment; it reads IFLRLFIIFVFIYALFIGLMY.

This sequence belongs to the glycosyltransferase 51 family.

The protein localises to the cell membrane. It carries out the reaction [GlcNAc-(1-&gt;4)-Mur2Ac(oyl-L-Ala-gamma-D-Glu-L-Lys-D-Ala-D-Ala)](n)-di-trans,octa-cis-undecaprenyl diphosphate + beta-D-GlcNAc-(1-&gt;4)-Mur2Ac(oyl-L-Ala-gamma-D-Glu-L-Lys-D-Ala-D-Ala)-di-trans,octa-cis-undecaprenyl diphosphate = [GlcNAc-(1-&gt;4)-Mur2Ac(oyl-L-Ala-gamma-D-Glu-L-Lys-D-Ala-D-Ala)](n+1)-di-trans,octa-cis-undecaprenyl diphosphate + di-trans,octa-cis-undecaprenyl diphosphate + H(+). Its pathway is cell wall biogenesis; peptidoglycan biosynthesis. In terms of biological role, peptidoglycan polymerase that catalyzes glycan chain elongation using lipid-linked disaccharide-pentapeptide as the substrate. The sequence is that of Monofunctional glycosyltransferase from Staphylococcus haemolyticus (strain JCSC1435).